Reading from the N-terminus, the 53-residue chain is UPF0391 membrane protein BamMC406_6344 (53 aa).

2 consecutive transmembrane segments (helical) span residues 5-25 (AIIF…GIAA) and 30-50 (IAKI…LLGV).

It belongs to the UPF0391 family.

The protein resides in the cell membrane. This is UPF0391 membrane protein BamMC406_6344 from Burkholderia ambifaria (strain MC40-6).